A 61-amino-acid polypeptide reads, in one-letter code: Large ribosomal subunit protein uL29 (61 aa).

The protein belongs to the universal ribosomal protein uL29 family.

This chain is Large ribosomal subunit protein uL29, found in Xanthomonas euvesicatoria pv. vesicatoria (strain 85-10) (Xanthomonas campestris pv. vesicatoria).